Here is a 414-residue protein sequence, read N- to C-terminus: tRNA (guanine-N(7)-)-methyltransferase non-catalytic subunit WDR4 (414 aa).

A2 is modified (N-acetylalanine). WD repeat units lie at residues Q60–V99, T101–R140, G144–F184, and G187–C227. The segment at E377 to S414 is disordered.

Belongs to the WD repeat TRM82 family. Non-catalytic component of the METTL1-WDR4 complex, composed of METTL1 and WDR4. Interacts with FEN1; the interaction is direct.

The protein resides in the nucleus. The protein localises to the chromosome. Its pathway is tRNA modification; N(7)-methylguanine-tRNA biosynthesis. Its function is as follows. Non-catalytic component of the METTL1-WDR4 methyltransferase complex required for the formation of N(7)-methylguanine in a subset of RNA species, such as tRNAs, mRNAs and microRNAs (miRNAs). In the METTL1-WDR4 methyltransferase complex, WDR4 acts as a scaffold for tRNA-binding. Required for the formation of N(7)-methylguanine at position 46 (m7G46) in a large subset of tRNAs that contain the 5'-RAGGU-3' motif within the variable loop. M7G46 interacts with C13-G22 in the D-loop to stabilize tRNA tertiary structure and protect tRNAs from decay. Also required for the formation of N(7)-methylguanine at internal sites in a subset of mRNAs. Also required for methylation of a specific subset of miRNAs, such as let-7. Independently of METTL1, also plays a role in genome stability: localizes at the DNA replication site and regulates endonucleolytic activities of FEN1. This is tRNA (guanine-N(7)-)-methyltransferase non-catalytic subunit WDR4 from Bos taurus (Bovine).